We begin with the raw amino-acid sequence, 255 residues long: Indole-3-glycerol phosphate synthase (255 aa).

It belongs to the TrpC family.

The catalysed reaction is 1-(2-carboxyphenylamino)-1-deoxy-D-ribulose 5-phosphate + H(+) = (1S,2R)-1-C-(indol-3-yl)glycerol 3-phosphate + CO2 + H2O. It functions in the pathway amino-acid biosynthesis; L-tryptophan biosynthesis; L-tryptophan from chorismate: step 4/5. The sequence is that of Indole-3-glycerol phosphate synthase from Streptococcus thermophilus (strain ATCC BAA-250 / LMG 18311).